We begin with the raw amino-acid sequence, 335 residues long: MVNVGINGFGRIGRIVFRNALEVGGVDVVAINDPFIDLDYMVYMFKYDSVHGRFKGSIEAKDGKLIVEGKPIHIFAEKDPANIPWGSVGADYVVESTGVFTTIDKASAHLKGGEKVVISAPSADAPMFVCGVNLETYDPKYKVISNASSTTNCLTPLAKVIHDKFGIVEGLISTIHATTATQKTVDGPSHKDWRGGRSVNNNIIPSSTGAANWVGKVIPSLNGKLTGLSFRVPTLDVSVVDLVVRLEKPADYKEIVAAIKEASETTHKGILGFTSDSVVSTDFVGSTDSSIFDSTAGIQLNPNFVKLIAWYDNEYGYSRRVVDLLKYVAEKDGAQ.

Residues 11 to 12, Asp33, and Lys78 contribute to the NAD(+) site; that span reads RI. Residues 148–150, Thr179, 208–209, and Arg231 contribute to the D-glyceraldehyde 3-phosphate site; these read SST and TG. Residue Asn313 coordinates NAD(+).

It belongs to the glyceraldehyde-3-phosphate dehydrogenase family. In terms of assembly, homotetramer.

The protein localises to the cytoplasm. It carries out the reaction D-glyceraldehyde 3-phosphate + phosphate + NAD(+) = (2R)-3-phospho-glyceroyl phosphate + NADH + H(+). It participates in carbohydrate degradation; glycolysis; pyruvate from D-glyceraldehyde 3-phosphate: step 1/5. In Pleurotus sajor-caju (Oyster mushroom), this protein is Glyceraldehyde-3-phosphate dehydrogenase (GPD).